A 422-amino-acid polypeptide reads, in one-letter code: Adhesin YadA (422 aa).

Positions 1-25 (MTKDFKISVSAALISALFSSPYAFA) are cleaved as a signal peptide. A surface exposed passenger domain region spans residues 26–330 (NNDEVHFTAV…KKAIRESNQY (305 aa)). Positions 216–362 (EKTQENANKK…LASSAALNSL (147 aa)) form a coiled coil. Positions 331-369 (TDHKFHQLDNRLDKLDTRVDKGLASSAALNSLFQPYGVG) are outer membrane translocation of the passenger domain. The next 4 beta stranded transmembrane spans lie at 369–379 (GKVNFTAGVGG), 383–394 (SQALAIGSGYRV), 401–407 (KAGVAYA), and 411–422 (DVMYNASFNIEW). Residues 370–422 (KVNFTAGVGGYRSSQALAIGSGYRVNESVALKAGVAYAGSSDVMYNASFNIEW) form a translocator domain region.

It belongs to the autotransporter-2 (AT-2) (TC 1.B.40) family. In terms of assembly, homotrimer.

The protein localises to the cell surface. Its subcellular location is the cell outer membrane. Functionally, collagen-binding outer membrane protein forming a fibrillar matrix on the bacterial cell surface. Promotes initial attachment and invasion of eukaryotic cells. Also protects the bacteria by being responsible for agglutination, serum resistance, complement inactivation and phagocytosis resistance. The polypeptide is Adhesin YadA (yadA) (Yersinia enterocolitica).